Here is a 200-residue protein sequence, read N- to C-terminus: Putative biotin transporter BioYB (200 aa).

Transmembrane regions (helical) follow at residues 13-33 (LIGMFAALMAVGANITSVAPF), 36-56 (VAGIPLSMQPFFCLLAALLLG), 61-81 (AIAMIVYALVGLAGAPVFAQF), 90-110 (GKSGGFIISYIPAAFAAGWFL), 121-141 (FLIASLIGTAIMYLIGTTYMY), and 158-178 (WGFMIWFMVKDTALAVILSFI).

It belongs to the BioY family.

It is found in the cell membrane. In terms of biological role, putative biotin transporter. The sequence is that of Putative biotin transporter BioYB (bioYB) from Bacillus subtilis (strain 168).